Reading from the N-terminus, the 146-residue chain is 3-dehydroquinate dehydratase (146 aa).

Tyr-24 serves as the catalytic Proton acceptor. Substrate contacts are provided by Asn-73, His-79, and Asp-86. The active-site Proton donor is His-99. Residues Leu-100–Ser-101 and Arg-110 each bind substrate.

The protein belongs to the type-II 3-dehydroquinase family. Homododecamer.

It catalyses the reaction 3-dehydroquinate = 3-dehydroshikimate + H2O. Its pathway is metabolic intermediate biosynthesis; chorismate biosynthesis; chorismate from D-erythrose 4-phosphate and phosphoenolpyruvate: step 3/7. Functionally, catalyzes a trans-dehydration via an enolate intermediate. The chain is 3-dehydroquinate dehydratase from Shewanella oneidensis (strain ATCC 700550 / JCM 31522 / CIP 106686 / LMG 19005 / NCIMB 14063 / MR-1).